The sequence spans 669 residues: DNA ligase (669 aa).

35-39 is a binding site for NAD(+); sequence DFEYD. Residues 52-71 are disordered; it reads YPEWDSPDSPTHRVGSDKTE. Residues 61–71 are compositionally biased toward basic and acidic residues; sequence PTHRVGSDKTE. Residues 84–85 and Glu115 contribute to the NAD(+) site; that span reads SL. The active-site N6-AMP-lysine intermediate is Lys117. Positions 138, 175, 290, and 314 each coordinate NAD(+). Residues Cys408, Cys411, Cys426, and Cys432 each coordinate Zn(2+). Positions 590–669 constitute a BRCT domain; sequence AVSNRLAGKT…EEEFLRLIEE (80 aa).

The protein belongs to the NAD-dependent DNA ligase family. LigA subfamily. Requires Mg(2+) as cofactor. The cofactor is Mn(2+).

It catalyses the reaction NAD(+) + (deoxyribonucleotide)n-3'-hydroxyl + 5'-phospho-(deoxyribonucleotide)m = (deoxyribonucleotide)n+m + AMP + beta-nicotinamide D-nucleotide.. DNA ligase that catalyzes the formation of phosphodiester linkages between 5'-phosphoryl and 3'-hydroxyl groups in double-stranded DNA using NAD as a coenzyme and as the energy source for the reaction. It is essential for DNA replication and repair of damaged DNA. The sequence is that of DNA ligase from Porphyromonas gingivalis (strain ATCC BAA-308 / W83).